We begin with the raw amino-acid sequence, 388 residues long: Succinate--CoA ligase [ADP-forming] subunit beta (388 aa).

The region spanning 9-244 (KALFAEYGLP…PSQDDAREAH (236 aa)) is the ATP-grasp domain. Residues K46, 53 to 55 (GRG), E99, T102, and E107 each bind ATP. Mg(2+)-binding residues include N199 and D213. Substrate-binding positions include N264 and 321-323 (GIV).

The protein belongs to the succinate/malate CoA ligase beta subunit family. In terms of assembly, heterotetramer of two alpha and two beta subunits. It depends on Mg(2+) as a cofactor.

The enzyme catalyses succinate + ATP + CoA = succinyl-CoA + ADP + phosphate. The catalysed reaction is GTP + succinate + CoA = succinyl-CoA + GDP + phosphate. The protein operates within carbohydrate metabolism; tricarboxylic acid cycle; succinate from succinyl-CoA (ligase route): step 1/1. Its function is as follows. Succinyl-CoA synthetase functions in the citric acid cycle (TCA), coupling the hydrolysis of succinyl-CoA to the synthesis of either ATP or GTP and thus represents the only step of substrate-level phosphorylation in the TCA. The beta subunit provides nucleotide specificity of the enzyme and binds the substrate succinate, while the binding sites for coenzyme A and phosphate are found in the alpha subunit. This chain is Succinate--CoA ligase [ADP-forming] subunit beta, found in Shewanella sediminis (strain HAW-EB3).